The chain runs to 29 residues: Trypsin inhibitor 4 (29 aa).

Disulfide bonds link C3–C20, C10–C22, and C16–C28.

The protein belongs to the protease inhibitor I7 (squash-type serine protease inhibitor) family.

It is found in the secreted. In terms of biological role, strongly inhibits trypsin, weakly inhibits chymotrypsin. This chain is Trypsin inhibitor 4, found in Cyclanthera pedata (Achocha).